The sequence spans 315 residues: MHRALLCPFPATTPHPQAAQLANDCLEWTRKCGLLPDESPRTLDKVRSYSALAAHCYPDAHFERLRAICDYYSWLFFFDDVCENTSLNGAEPKVVSSLLFDVYGVLRGPTAAVGHAPFAQALADIWRRIGDGCPGFWRRRLIRHVENYIDGCVWEAQNRQLDRVPSRAVFEGMRMHTSTMYEFWDFIEYAGDLFLPDEVVEHPLVAEVRRAGNAIASFANDIYSLRKETSNRDVHNLVVVLMHEERIELEAAYARAAGIHDAQVEHFLDLVKHLPTFSATIDRNLARYVEGIRIWIRANHDWSIVTPRYNEPDAR.

Mg(2+) contacts are provided by Asp-79, Asn-220, Ser-224, and Glu-228. Positions 79–83 match the DDXXD motif motif; the sequence is DDVCE. Residues 220–228 carry the NXXXSXXXE motif motif; it reads NDIYSLRKE.

Belongs to the terpene synthase family. The cofactor is Mg(2+).

The catalysed reaction is (2E,6E)-farnesyl diphosphate + H2O = 10-epi-cubebol + diphosphate. In terms of biological role, catalyzes the cyclization of farnesyl diphosphate (FPP) to 10-epi-cubebol. Is also responsible for the formation of many other sesquiterpenes, mainly cadalanes and cubebanes, including 1,10-di-epi-cubebol and the cadalanes delta-cadinene, T-cadinol and alpha-cadinol. This chain is 10-epi-cubebol synthase, found in Sorangium cellulosum (strain So ce56) (Polyangium cellulosum (strain So ce56)).